The primary structure comprises 128 residues: Large ribosomal subunit protein bL20 (128 aa).

This sequence belongs to the bacterial ribosomal protein bL20 family.

Its function is as follows. Binds directly to 23S ribosomal RNA and is necessary for the in vitro assembly process of the 50S ribosomal subunit. It is not involved in the protein synthesizing functions of that subunit. The sequence is that of Large ribosomal subunit protein bL20 from Anaplasma marginale (strain Florida).